Here is a 140-residue protein sequence, read N- to C-terminus: Nucleoside diphosphate kinase (140 aa).

ATP-binding residues include lysine 11, phenylalanine 59, arginine 87, threonine 93, arginine 104, and asparagine 114. The active-site Pros-phosphohistidine intermediate is histidine 117.

Belongs to the NDK family. As to quaternary structure, homotetramer. It depends on Mg(2+) as a cofactor.

It is found in the cytoplasm. It carries out the reaction a 2'-deoxyribonucleoside 5'-diphosphate + ATP = a 2'-deoxyribonucleoside 5'-triphosphate + ADP. The enzyme catalyses a ribonucleoside 5'-diphosphate + ATP = a ribonucleoside 5'-triphosphate + ADP. In terms of biological role, major role in the synthesis of nucleoside triphosphates other than ATP. The ATP gamma phosphate is transferred to the NDP beta phosphate via a ping-pong mechanism, using a phosphorylated active-site intermediate. This is Nucleoside diphosphate kinase from Rhizobium johnstonii (strain DSM 114642 / LMG 32736 / 3841) (Rhizobium leguminosarum bv. viciae).